A 398-amino-acid chain; its full sequence is tRNA-specific 2-thiouridylase MnmA (398 aa).

Residues 20-27 (AMSGGVDS) and Leu46 contribute to the ATP site. Residue Cys114 is the Nucleophile of the active site. A disulfide bridge connects residues Cys114 and Cys210. Gly138 contributes to the ATP binding site. The tract at residues 160–162 (RDQ) is interaction with tRNA. Cys210 serves as the catalytic Cysteine persulfide intermediate.

It belongs to the MnmA/TRMU family.

The protein localises to the cytoplasm. The enzyme catalyses S-sulfanyl-L-cysteinyl-[protein] + uridine(34) in tRNA + AH2 + ATP = 2-thiouridine(34) in tRNA + L-cysteinyl-[protein] + A + AMP + diphosphate + H(+). Catalyzes the 2-thiolation of uridine at the wobble position (U34) of tRNA, leading to the formation of s(2)U34. The protein is tRNA-specific 2-thiouridylase MnmA of Brucella canis (strain ATCC 23365 / NCTC 10854 / RM-666).